The chain runs to 200 residues: Large ribosomal subunit protein uL4 (200 aa).

A disordered region spans residues 42–65 (TRAQKTRSEVSGGGAKPWRQKGTG).

It belongs to the universal ribosomal protein uL4 family. As to quaternary structure, part of the 50S ribosomal subunit.

Functionally, one of the primary rRNA binding proteins, this protein initially binds near the 5'-end of the 23S rRNA. It is important during the early stages of 50S assembly. It makes multiple contacts with different domains of the 23S rRNA in the assembled 50S subunit and ribosome. In terms of biological role, forms part of the polypeptide exit tunnel. The chain is Large ribosomal subunit protein uL4 from Vibrio vulnificus (strain CMCP6).